We begin with the raw amino-acid sequence, 74 residues long: Defensin-like protein 39 (74 aa).

Residues 1–28 (MEKKSLAALSFLLLLVLFVAQEIVVTEA) form the signal peptide. Cystine bridges form between Cys31–Cys74, Cys42–Cys63, Cys48–Cys68, and Cys52–Cys70.

Belongs to the DEFL family. In terms of tissue distribution, pods.

The protein localises to the secreted. Its function is as follows. Possesses antifungal activity. The chain is Defensin-like protein 39 (PI39) from Pisum sativum (Garden pea).